A 326-amino-acid chain; its full sequence is Phospho-N-acetylmuramoyl-pentapeptide-transferase (326 aa).

Transmembrane regions (helical) follow at residues 3-23 (ISIS…PAFI), 51-71 (TMGG…VALF), 79-99 (VGMI…DDFL), 115-135 (LALQ…GGDM), 138-158 (VFGY…FWLV), 169-189 (GIDG…GVIA), 195-215 (MDIL…FVFN), 221-243 (VFMG…MALH), and 306-326 (FFFW…LYLM).

This sequence belongs to the glycosyltransferase 4 family. MraY subfamily. It depends on Mg(2+) as a cofactor.

The protein resides in the cell membrane. It catalyses the reaction UDP-N-acetyl-alpha-D-muramoyl-L-alanyl-gamma-D-glutamyl-L-lysyl-D-alanyl-D-alanine + di-trans,octa-cis-undecaprenyl phosphate = Mur2Ac(oyl-L-Ala-gamma-D-Glu-L-Lys-D-Ala-D-Ala)-di-trans,octa-cis-undecaprenyl diphosphate + UMP. The protein operates within cell wall biogenesis; peptidoglycan biosynthesis. Functionally, catalyzes the initial step of the lipid cycle reactions in the biosynthesis of the cell wall peptidoglycan: transfers peptidoglycan precursor phospho-MurNAc-pentapeptide from UDP-MurNAc-pentapeptide onto the lipid carrier undecaprenyl phosphate, yielding undecaprenyl-pyrophosphoryl-MurNAc-pentapeptide, known as lipid I. This Streptococcus pneumoniae (strain Taiwan19F-14) protein is Phospho-N-acetylmuramoyl-pentapeptide-transferase.